Here is a 294-residue protein sequence, read N- to C-terminus: 4-hydroxy-tetrahydrodipicolinate synthase (294 aa).

Thr-47 is a pyruvate binding site. Catalysis depends on Tyr-135, which acts as the Proton donor/acceptor. Lys-163 serves as the catalytic Schiff-base intermediate with substrate. Residue Thr-205 participates in pyruvate binding.

This sequence belongs to the DapA family. As to quaternary structure, homotetramer; dimer of dimers.

The protein resides in the cytoplasm. The catalysed reaction is L-aspartate 4-semialdehyde + pyruvate = (2S,4S)-4-hydroxy-2,3,4,5-tetrahydrodipicolinate + H2O + H(+). Its pathway is amino-acid biosynthesis; L-lysine biosynthesis via DAP pathway; (S)-tetrahydrodipicolinate from L-aspartate: step 3/4. Catalyzes the condensation of (S)-aspartate-beta-semialdehyde [(S)-ASA] and pyruvate to 4-hydroxy-tetrahydrodipicolinate (HTPA). The sequence is that of 4-hydroxy-tetrahydrodipicolinate synthase from Rickettsia montanensis.